The primary structure comprises 270 residues: Putative phosphoenolpyruvate synthase regulatory protein (270 aa).

Gly149–Thr156 is a binding site for ADP.

This sequence belongs to the pyruvate, phosphate/water dikinase regulatory protein family. PSRP subfamily.

It carries out the reaction [pyruvate, water dikinase] + ADP = [pyruvate, water dikinase]-phosphate + AMP + H(+). The enzyme catalyses [pyruvate, water dikinase]-phosphate + phosphate + H(+) = [pyruvate, water dikinase] + diphosphate. In terms of biological role, bifunctional serine/threonine kinase and phosphorylase involved in the regulation of the phosphoenolpyruvate synthase (PEPS) by catalyzing its phosphorylation/dephosphorylation. This Pseudoalteromonas atlantica (strain T6c / ATCC BAA-1087) protein is Putative phosphoenolpyruvate synthase regulatory protein.